The following is a 418-amino-acid chain: Sialidase-3 (418 aa).

The FRIP motif motif lies at 24–27 (YRIP). 2 residues coordinate substrate: Arg25 and Arg45. The active-site Proton acceptor is Asp50. A BNR 1 repeat occupies 129–140 (LCSEDAGCSWGE). 2 residues coordinate substrate: Tyr179 and Tyr181. The stretch at 203–214 (SDDFGVTWHHGK) is one BNR 2 repeat. 2 residues coordinate substrate: Glu223 and Arg243. One copy of the BNR 3 repeat lies at 254–265 (STDSGGCFQKPT). Ser312 carries the phosphoserine modification. Residue Arg339 participates in substrate binding. Tyr369 functions as the Nucleophile in the catalytic mechanism. The active site involves Glu386.

This sequence belongs to the glycosyl hydrolase 33 family. In terms of assembly, interacts with CAV1; this interaction enhances NEU3 sialidase activity within caveola. Interacts with EGFR; this interaction mediates desialylation of EGFR and enhances downstream signaling. Palmitoylated; may regulate intracellular trafficking and anchorage to plasma membrane and endomembranes. Expressed in heart, brain and cerebral cortex.

The protein localises to the cell membrane. It is found in the membrane. It localises to the caveola. Its subcellular location is the early endosome membrane. The protein resides in the recycling endosome membrane. The protein localises to the lysosome membrane. It carries out the reaction Hydrolysis of alpha-(2-&gt;3)-, alpha-(2-&gt;6)-, alpha-(2-&gt;8)- glycosidic linkages of terminal sialic acid residues in oligosaccharides, glycoproteins, glycolipids, colominic acid and synthetic substrates.. The catalysed reaction is a ganglioside GD1a + H2O = a ganglioside GM1 + N-acetylneuraminate. The enzyme catalyses a ganglioside GD1a (d18:1(4E)) + H2O = a ganglioside GM1 (d18:1(4E)) + N-acetylneuraminate. It catalyses the reaction a ganglioside GD1b + H2O = a ganglioside GM1 + N-acetylneuraminate. It carries out the reaction a ganglioside GD1b (d18:1(4E)) + H2O = a ganglioside GM1 (d18:1(4E)) + N-acetylneuraminate. The catalysed reaction is a ganglioside GD3 + H2O = a ganglioside GM3 + N-acetylneuraminate. The enzyme catalyses a ganglioside GD3 (d18:1(4E)) + H2O = a ganglioside GM3 (d18:1(4E)) + N-acetylneuraminate. It catalyses the reaction a ganglioside GM3 + H2O = a beta-D-galactosyl-(1-&gt;4)-beta-D-glucosyl-(1&lt;-&gt;1)-ceramide + N-acetylneuraminate. It carries out the reaction a ganglioside GM1 + H2O = a ganglioside GA1 + N-acetylneuraminate. The catalysed reaction is a ganglioside GM1 (d18:1(4E)) + H2O = a ganglioside GA1 (d18:1(4E)) + N-acetylneuraminate. The enzyme catalyses a ganglioside GM2 (d18:1(4E)) + H2O = a ganglioside GA2 (d18:1(4E)) + N-acetylneuraminate. It catalyses the reaction a ganglioside GM3 (d18:1(4E)) + H2O = a beta-D-Gal-(1-&gt;4)-beta-D-Glc-(1&lt;-&gt;1)-Cer(d18:1(4E)) + N-acetylneuraminate. It carries out the reaction a ganglioside GT1b + H2O = a ganglioside GD1b + N-acetylneuraminate. Its function is as follows. Exo-alpha-sialidase that catalyzes the hydrolytic cleavage of the terminal sialic acid (N-acetylneuraminic acid, Neu5Ac) of a glycan moiety in the catabolism of glycolipids, glycoproteins and oligosacharides. Displays high catalytic efficiency for gangliosides including alpha-(2-&gt;3)-sialylated GD1a and GM3 and alpha-(2-&gt;8)-sialylated GD3. Plays a role in the regulation of transmembrane signaling through the modulation of ganglioside content of the lipid bilayer and by direct interaction with signaling receptors, such as EGFR. Desialylates EGFR and activates downstream signaling in proliferating cells. Contributes to clathrin-mediated endocytosis by regulating sorting of endocytosed receptors to early and recycling endosomes. The chain is Sialidase-3 (Neu3) from Mus musculus (Mouse).